Reading from the N-terminus, the 236-residue chain is 7-cyano-7-deazaguanine synthase (236 aa).

ATP is bound at residue 13–23 (FSGGQDSTVCL). Residues cysteine 200, cysteine 215, cysteine 218, and cysteine 221 each coordinate Zn(2+).

The protein belongs to the QueC family. Zn(2+) serves as cofactor.

The catalysed reaction is 7-carboxy-7-deazaguanine + NH4(+) + ATP = 7-cyano-7-deazaguanine + ADP + phosphate + H2O + H(+). It functions in the pathway purine metabolism; 7-cyano-7-deazaguanine biosynthesis. Catalyzes the ATP-dependent conversion of 7-carboxy-7-deazaguanine (CDG) to 7-cyano-7-deazaguanine (preQ(0)). The polypeptide is 7-cyano-7-deazaguanine synthase (Parvibaculum lavamentivorans (strain DS-1 / DSM 13023 / NCIMB 13966)).